The following is an 867-amino-acid chain: Transcription factor E2F8 (867 aa).

The disordered stretch occupies residues 38–58 (DFGPLTTPTKPKEGSQGEPWT). Phosphoserine occurs at positions 71 and 102. 2 consecutive DNA-binding regions follow at residues 113–182 (RKEK…TWHG) and 261–347 (RKDK…KWTG). Disordered stretches follow at residues 408-432 (RRKI…NSAP), 532-616 (QSVT…SGSK), and 771-800 (APEN…GQSV). Ser413 and Ser417 each carry phosphoserine. 2 stretches are compositionally biased toward polar residues: residues 413-432 (SAPS…NSAP) and 532-556 (QSVT…TGSK). Residues 557–567 (DSTDATTEKAA) show a composition bias toward basic and acidic residues. Over residues 568–579 (NDTSKASASTRP) the composition is skewed to polar residues. A compositionally biased stretch (basic and acidic residues) spans 594-604 (RTREPAGERGS). The span at 775-800 (AGTQQGRATNYDSPVPGQSQPNGQSV) shows a compositional bias: polar residues.

This sequence belongs to the E2F/DP family. In terms of assembly, homodimer and heterodimer: mainly forms homodimers and, to a lesser extent, heterodimers with E2F8. Dimerization is important for DNA-binding. Interacts with HIF1A.

The protein localises to the nucleus. Functionally, atypical E2F transcription factor that participates in various processes such as angiogenesis and polyploidization of specialized cells. Mainly acts as a transcription repressor that binds DNA independently of DP proteins and specifically recognizes the E2 recognition site 5'-TTTC[CG]CGC-3'. Directly represses transcription of classical E2F transcription factors such as E2F1: component of a feedback loop in S phase by repressing the expression of E2F1, thereby preventing p53/TP53-dependent apoptosis. Plays a key role in polyploidization of cells in placenta and liver by regulating the endocycle, probably by repressing genes promoting cytokinesis and antagonizing action of classical E2F proteins (E2F1, E2F2 and/or E2F3). Required for placental development by promoting polyploidization of trophoblast giant cells. Acts as a promoter of sprouting angiogenesis, possibly by acting as a transcription activator: associates with HIF1A, recognizes and binds the VEGFA promoter, which is different from canonical E2 recognition site, and activates expression of the VEGFA gene. The sequence is that of Transcription factor E2F8 (E2F8) from Homo sapiens (Human).